The following is a 427-amino-acid chain: D-inositol 3-phosphate glycosyltransferase 2 (427 aa).

His14 lines the 1D-myo-inositol 3-phosphate pocket. Residues Gln20–Pro21 and Gly28 each bind UDP-N-acetyl-alpha-D-glucosamine. 1D-myo-inositol 3-phosphate contacts are provided by residues Asp25–Asn30, Lys83, Tyr116, Thr140, and Arg160. Residues Arg234, Lys239, and Val300 each contribute to the UDP-N-acetyl-alpha-D-glucosamine site. Residues Tyr309, Arg310, and Ala312 each contribute to the Mg(2+) site. Positions 322 and 330 each coordinate UDP-N-acetyl-alpha-D-glucosamine. Thr336 is a Mg(2+) binding site.

Belongs to the glycosyltransferase group 1 family. MshA subfamily. Homodimer.

The catalysed reaction is 1D-myo-inositol 3-phosphate + UDP-N-acetyl-alpha-D-glucosamine = 1D-myo-inositol 2-acetamido-2-deoxy-alpha-D-glucopyranoside 3-phosphate + UDP + H(+). Catalyzes the transfer of a N-acetyl-glucosamine moiety to 1D-myo-inositol 3-phosphate to produce 1D-myo-inositol 2-acetamido-2-deoxy-glucopyranoside 3-phosphate in the mycothiol biosynthesis pathway. In Catenulispora acidiphila (strain DSM 44928 / JCM 14897 / NBRC 102108 / NRRL B-24433 / ID139908), this protein is D-inositol 3-phosphate glycosyltransferase 2.